A 528-amino-acid polypeptide reads, in one-letter code: Cytochrome b5 reductase 4 (528 aa).

Met1 bears the N-acetylmethionine mark. The interval 1 to 29 (MLNVPSQAFPAPGSQQRVSSQGRSKVPLK) is disordered. Residues 13-24 (GSQQRVSSQGRS) show a composition bias toward low complexity. One can recognise a Cytochrome b5 heme-binding domain in the interval 54–130 (LIEVTEEELK…LKECLVGRMA (77 aa)). Residues His89 and His112 each coordinate heme. In terms of domain architecture, CS spans 172–263 (LSSPSYDWFQ…KESVSWQCLG (92 aa)). Positions 280–392 (LYYRRCQLIS…SGPEGDFKVS (113 aa)) constitute an FAD-binding FR-type domain. FAD-binding positions include 372 to 387 (DRLQ…GPEG) and 399 to 431 (DLFL…KVKL).

This sequence belongs to the flavoprotein pyridine nucleotide cytochrome reductase family. Requires FAD as cofactor. Ubiquitously expressed. Isoform 2 is expressed in testis, brain, skeletal muscle and in the male germline.

Its subcellular location is the endoplasmic reticulum. The enzyme catalyses 2 Fe(III)-[cytochrome b5] + NADH = 2 Fe(II)-[cytochrome b5] + NAD(+) + H(+). In terms of biological role, NADH-cytochrome b5 reductase involved in endoplasmic reticulum stress response pathway. Plays a critical role in protecting pancreatic beta-cells against oxidant stress, possibly by protecting the cell from excess buildup of reactive oxygen species (ROS). The protein is Cytochrome b5 reductase 4 (Cyb5r4) of Mus musculus (Mouse).